Consider the following 94-residue polypeptide: UPF0358 protein Bcer98_2651 (94 aa).

The protein belongs to the UPF0358 family.

This is UPF0358 protein Bcer98_2651 from Bacillus cytotoxicus (strain DSM 22905 / CIP 110041 / 391-98 / NVH 391-98).